A 1353-amino-acid polypeptide reads, in one-letter code: MERLCSDGFAFPHYYIKPYHLKRIHRAVLRGNLEKLKYLLLTYYDANKRDRKERTALHLACATGQPEMVHLLVSRRCELNLCDREDRTPLIKAVQLRQEACATLLLQNGADPNITDVFGRTALHYAVYNEDTSMIEKLLSHGTNIEECSKNEYQPLLLAVSRRKVKMVEFLLKKKANVNAIDYLGRSALILAVTLGEKDIVILLLQHNIDVFSRDVYGKLAEDYASEAENRVIFDLIYEYKRKRYEDLPINSNPVSPQKQRAEKATSDDKDSVSNIATEIKEGPISGTVSSQKQPAEKATSDEKDSVSNIATEIKEGQQSGTVSPQKQSAQKVIFKKKVSLLNIATRIMGGGKSGTVSSQKQPASKTASDKTDSALNTATEIKDGLQCGTVSSQKQQALKATTDEEGSVSNIATEIKDGEKSGTVSSQKKPALKATSDEKDSFSNITREKKDGEISRTVSSQKPPALKATSVKEDSVLNIAREKKDGEKSRTVSFEQPPGLKATRDEKDSLLNIARGKKDGEKTRRVSSHKQPSLKATSDKEDSVPNMATETKDEQISGTVSCQKQPALKATSDKKDSVSNIPTEIKDGQQSGTVSSQKQPAWKATSVKKDSVSNIATEIKDGQIRGTVSSQRRPALKTTGDEKDSVSNIAREIKDGEKSGTVSPQKQSAQKVIFKKKVSLLNIATRITGGGKSGTEYPENLRTLKATIENKDSVLNTATKMKEVQTSTPAEQDLEMASEGEQKRLEEYENNQPQVKNQIHSRDDLDDIIQSSQTVSEDGDSLCCNCKNVILLIDQHEMKCKDCVHLLKIKNTFCLWKRLIKLKDNHCEQLRVKIRKLKNKASVLQKRISEKEEIKSQLKHEILELEKELCSLRFAIQQEKKKRRNVEELHQKVREKLRITEEQYRIEADVTKPIKPALKSAEVELKTGGNNSNQVSETDEKEDLLHENRLMQDEIARLRLEKDTIKNQNLEKKYLKDFEIVKRKHEDLQKALKRNGETLAKTIACYSGQLAALTDENTTLRSKLEKQRESRQRLETEMQSYRCRLNAARCDHDQSHSSKRDQELAFQGTVDKCRHLQENLNSHVLILSLQLSKAESKSRVLKTELHYTGEALKEKALVFEHVQSELKQKQSQMKDIEKMYKSGYNTMEKCIEKQERFCQLKKQNMLLQQQLDDARNKADNQEKAILNIQARCDARVQNLQAECRKHRLLLEEDNKMLVNELNHSKEKECQYEKEKAEREVAVRQLQQKRDDVLNKGSATKALLDASSRHCTYLENGMQDSRKKLDQMRSQFQEIQDQLTATIRCTKEMEGDTQKLEVEHVMMRKIIKKQDDQIERLEKILQHSSLMLQVFES.

ANK repeat units follow at residues Y19–K48, K52–L81, E85–I114, F118–E147, N151–A180, and L184–S213. Disordered stretches follow at residues P249–V307 and M349–S607. Residues I250–K259 are compositionally biased toward polar residues. Basic and acidic residues-rich tracts occupy residues Q260–S272 and P295–S306. Composition is skewed to polar residues over residues G355–T367 and G389–K400. Basic and acidic residues-rich tracts occupy residues T436–I455 and S471–R491. Positions V579 to Q600 are enriched in polar residues. 4 coiled-coil regions span residues A731–S762, I821–E908, S937–Q1055, and V1119–S1344.

The protein belongs to the ANKRD36 family.

The sequence is that of Ankyrin repeat domain-containing protein 36B (ANKRD36B) from Homo sapiens (Human).